The following is a 132-amino-acid chain: Long-chain acyl-CoA thioesterase FadM (132 aa).

Residue aspartate 13 is part of the active site.

Belongs to the 4-hydroxybenzoyl-CoA thioesterase family. Homotetramer.

It catalyses the reaction (3E,5Z)-tetradecadienoyl-CoA + H2O = (3E,5Z)-tetradecadienoate + CoA + H(+). It carries out the reaction (3E,5Z)-dodecadienoyl-CoA + H2O = (3E,5Z)-dodecadienoate + CoA + H(+). The enzyme catalyses (9Z)-octadecenoyl-CoA + H2O = (9Z)-octadecenoate + CoA + H(+). The catalysed reaction is octadecanoyl-CoA + H2O = octadecanoate + CoA + H(+). It catalyses the reaction hexadecanoyl-CoA + H2O = hexadecanoate + CoA + H(+). It carries out the reaction (3S)-hydroxytetradecanoyl-CoA + H2O = (3S)-hydroxytetradecanoate + CoA + H(+). The enzyme catalyses tetradecanoyl-CoA + H2O = tetradecanoate + CoA + H(+). In terms of biological role, long-chain acyl-CoA thioesterase that could be involved in beta-oxidation of fatty acids. Is most active with 3,5-tetradecadienoyl-CoA, a metabolite of oleic acid that is hydrolyzed during oleate beta-oxidation, but can also use other substrates such as 3,5-dodecadienoyl-CoA, 9-cis-octadecenoyl-CoA, octadecanoyl-CoA, hexadecanoyl-CoA, 3-hydroxytetradecanoyl-CoA and tetradecanoyl-CoA. The sequence is that of Long-chain acyl-CoA thioesterase FadM from Escherichia coli (strain K12).